Here is a 376-residue protein sequence, read N- to C-terminus: cAMP-dependent protein kinase type I regulatory subunit (376 aa).

Residues 1–131 (MSYMMAKTLE…ALSKAIAKNV (131 aa)) are dimerization and phosphorylation. A disordered region spans residues 72 to 93 (PDDCEDLSPMPQTAAPPVRRRG). The short motif at 91–95 (RRGGI) is the Pseudophosphorylation motif element. Serine 96 is modified (phosphoserine). 3',5'-cyclic AMP contacts are provided by residues 132–247 (LFAH…FLSR), glutamate 197, arginine 206, 250–371 (ILES…YNSF), glutamate 321, and arginine 330.

This sequence belongs to the cAMP-dependent kinase regulatory chain family. Tetramer, composed of 2 regulatory (R) and 2 catalytic (C) subunits. In the presence of cAMP it dissociates into 2 active monomeric C subunits and an R dimer. The pseudophosphorylation site binds to the substrate-binding region of the catalytic chain but is not phosphorylated. The physiological significance of phosphorylations by other kinases is unclear.

The chain is cAMP-dependent protein kinase type I regulatory subunit (Pka-R1) from Drosophila melanogaster (Fruit fly).